The primary structure comprises 145 residues: Probable disulfide formation protein (145 aa).

Residues 9–28 traverse the membrane as a helical segment; the sequence is ENLLLLIWVQAFLALAGSLF. Cys38 and Cys41 are oxidised to a cystine. Helical transmembrane passes span 43 to 62 and 69 to 86; these read YQRI…AIKK and PGLF…YHYL. A disulfide bond links Cys100 and Cys106. A helical transmembrane segment spans residues 115–137; it reads GFISIPFMAGVAFLIIFVLHLLI.

It belongs to the DsbB family. BdbC subfamily.

It localises to the cell membrane. In terms of biological role, required for disulfide bond formation in some proteins. This chain is Probable disulfide formation protein, found in Oceanobacillus iheyensis (strain DSM 14371 / CIP 107618 / JCM 11309 / KCTC 3954 / HTE831).